The chain runs to 188 residues: Elongation factor P (188 aa).

The protein belongs to the elongation factor P family.

The protein resides in the cytoplasm. The protein operates within protein biosynthesis; polypeptide chain elongation. Involved in peptide bond synthesis. Stimulates efficient translation and peptide-bond synthesis on native or reconstituted 70S ribosomes in vitro. Probably functions indirectly by altering the affinity of the ribosome for aminoacyl-tRNA, thus increasing their reactivity as acceptors for peptidyl transferase. The sequence is that of Elongation factor P from Christiangramia forsetii (strain DSM 17595 / CGMCC 1.15422 / KT0803) (Gramella forsetii).